Consider the following 288-residue polypeptide: Homoserine kinase (288 aa).

79 to 89 (PPARGLGSSSA) contacts ATP.

Belongs to the GHMP kinase family. Homoserine kinase subfamily.

The protein localises to the cytoplasm. It carries out the reaction L-homoserine + ATP = O-phospho-L-homoserine + ADP + H(+). Its pathway is amino-acid biosynthesis; L-threonine biosynthesis; L-threonine from L-aspartate: step 4/5. Catalyzes the ATP-dependent phosphorylation of L-homoserine to L-homoserine phosphate. The protein is Homoserine kinase of Listeria welshimeri serovar 6b (strain ATCC 35897 / DSM 20650 / CCUG 15529 / CIP 8149 / NCTC 11857 / SLCC 5334 / V8).